The following is a 151-amino-acid chain: Macrodomain Ter protein (151 aa).

This sequence belongs to the MatP family. As to quaternary structure, homodimer.

The protein localises to the cytoplasm. Required for spatial organization of the terminus region of the chromosome (Ter macrodomain) during the cell cycle. Prevents early segregation of duplicated Ter macrodomains during cell division. Binds specifically to matS, which is a 13 bp signature motif repeated within the Ter macrodomain. The chain is Macrodomain Ter protein from Cronobacter sakazakii (strain ATCC BAA-894) (Enterobacter sakazakii).